Reading from the N-terminus, the 420-residue chain is Carbohydrate sulfotransferase 1 (420 aa).

M1 is a topological domain (cytoplasmic). The chain crosses the membrane as a helical; Signal-anchor for type II membrane protein span at residues 2–23 (QCSWKAVILLALVSIAIQYTAI). The Lumenal portion of the chain corresponds to 24–420 (RTFTAKPFHI…IEDKTFIPFL (397 aa)). The N-linked (GlcNAc...) asparagine glycan is linked to N64. 77-83 (TRSGSSF) lines the 3'-phosphoadenylyl sulfate pocket. N153 and N197 each carry an N-linked (GlcNAc...) asparagine glycan. 242–250 (RDPRGILSS) serves as a coordination point for 3'-phosphoadenylyl sulfate. 2 N-linked (GlcNAc...) asparagine glycosylation sites follow: N342 and N405.

The protein belongs to the sulfotransferase 1 family. Gal/GlcNAc/GalNAc subfamily.

The protein resides in the golgi apparatus membrane. It catalyses the reaction 3'-phosphoadenylyl sulfate + keratan = adenosine 3',5'-bisphosphate + keratan 6'-sulfate.. In terms of biological role, sulfotransferase that utilizes 3'-phospho-5'-adenylyl sulfate (PAPS) as sulfonate donor to catalyze the transfer of sulfate to position 6 of galactose (Gal) residues of keratan. This Danio rerio (Zebrafish) protein is Carbohydrate sulfotransferase 1 (chst1).